Reading from the N-terminus, the 362-residue chain is MVLMAPRTLLLLLSGALALTQTWARSHSMRYFYTTMSRPGAGEPRFISVGYVDDTQFVRFDSDDASPREEPRAPWMEREGPKYWDRNTQICKAQAQTERENLRIALRYYNQSEGGSHTMQVMYGCDVGPDGPFLRGYEQHAYDGKDYIALNEDLRSWTAADMAAQITKRKWEAARRAEQRRVYLEGEFVEWLRRYLENGKETLQRADPPKTHMTHHPISDHEATLRCWALGFYPAEITLTWQRDGEDQTQDTELVETRPAGDGTFQKWAAVVVPSGEEQRYTCHVQHEGLPEPLTLRWEPSSQPTVPIVGIVAGLVLLVAVVTGAVVAAVMWRKKSSDRKGGSYSQAASSNSAQGSDVSLTA.

Residues 1–24 (MVLMAPRTLLLLLSGALALTQTWA) form the signal peptide. An alpha-1 region spans residues 25–114 (RSHSMRYFYT…ALRYYNQSEG (90 aa)). Residues 25 to 308 (RSHSMRYFYT…EPSSQPTVPI (284 aa)) lie on the Extracellular side of the membrane. Asn-110 carries an N-linked (GlcNAc...) asparagine glycan. The segment at 115–206 (GSHTMQVMYG…ENGKETLQRA (92 aa)) is alpha-2. Positions 207–298 (DPPKTHMTHH…GLPEPLTLRW (92 aa)) are alpha-3. The Ig-like C1-type domain maps to 209-297 (PKTHMTHHPI…EGLPEPLTLR (89 aa)). A disulfide bridge connects residues Cys-227 and Cys-283. The tract at residues 299–308 (EPSSQPTVPI) is connecting peptide. The helical transmembrane segment at 309-332 (VGIVAGLVLLVAVVTGAVVAAVMW) threads the bilayer. The Cytoplasmic segment spans residues 333 to 362 (RKKSSDRKGGSYSQAASSNSAQGSDVSLTA). A disordered region spans residues 337–362 (SDRKGGSYSQAASSNSAQGSDVSLTA). Residues 342-356 (GSYSQAASSNSAQGS) are compositionally biased toward low complexity.

It belongs to the MHC class I family. In terms of assembly, heterodimer of an alpha chain and a beta chain (beta-2-microglobulin).

Its subcellular location is the cell membrane. Functionally, involved in the presentation of foreign antigens to the immune system. In Homo sapiens (Human), this protein is Putative HLA class I histocompatibility antigen, alpha chain H (HLA-H).